We begin with the raw amino-acid sequence, 211 residues long: Urease accessory protein UreE (211 aa).

Residues 170 to 211 (EHHGHSHDRGCDHSHSHSHDHDHDHGHVHGPGCGHAPHHRHD) form a disordered region. Over residues 176-196 (HDRGCDHSHSHSHDHDHDHGH) the composition is skewed to basic and acidic residues.

It belongs to the UreE family.

The protein localises to the cytoplasm. Involved in urease metallocenter assembly. Binds nickel. Probably functions as a nickel donor during metallocenter assembly. In Ralstonia nicotianae (strain ATCC BAA-1114 / GMI1000) (Ralstonia solanacearum), this protein is Urease accessory protein UreE.